The sequence spans 139 residues: Dehydrin DHN1 (139 aa).

The tract at residues 1 to 139 is disordered; that stretch reads MEYQGQHGHA…IKEKLPGGQH (139 aa). Residues 23-42 show a composition bias toward gly residues; it reads GHGGFTGGPTGTHGAAGVGG. The segment covering 49-58 has biased composition (basic and acidic residues); sequence RDGHKTDGVL. The segment covering 59-68 has biased composition (low complexity); that stretch reads RRSGSSSSSS. Basic and acidic residues predominate over residues 83–98; the sequence is KEKIKEKLPGGAHKDA. The segment covering 99–109 has biased composition (low complexity); that stretch reads AGQQQQTAMAG. The span at 120 to 139 shows a compositional bias: basic and acidic residues; that stretch reads TGEKKGVMDKIKEKLPGGQH.

The protein belongs to the plant dehydrin family.

In Hordeum vulgare (Barley), this protein is Dehydrin DHN1 (DHN1).